A 152-amino-acid polypeptide reads, in one-letter code: Deoxyuridine 5'-triphosphate nucleotidohydrolase (152 aa).

Substrate-binding positions include 71–73 (RSG), Asn84, 88–90 (LID), and Met98.

Belongs to the dUTPase family. Mg(2+) is required as a cofactor.

The catalysed reaction is dUTP + H2O = dUMP + diphosphate + H(+). It participates in pyrimidine metabolism; dUMP biosynthesis; dUMP from dCTP (dUTP route): step 2/2. This enzyme is involved in nucleotide metabolism: it produces dUMP, the immediate precursor of thymidine nucleotides and it decreases the intracellular concentration of dUTP so that uracil cannot be incorporated into DNA. The protein is Deoxyuridine 5'-triphosphate nucleotidohydrolase of Erwinia tasmaniensis (strain DSM 17950 / CFBP 7177 / CIP 109463 / NCPPB 4357 / Et1/99).